The primary structure comprises 163 residues: SsrA-binding protein (163 aa).

This sequence belongs to the SmpB family.

Its subcellular location is the cytoplasm. In terms of biological role, required for rescue of stalled ribosomes mediated by trans-translation. Binds to transfer-messenger RNA (tmRNA), required for stable association of tmRNA with ribosomes. tmRNA and SmpB together mimic tRNA shape, replacing the anticodon stem-loop with SmpB. tmRNA is encoded by the ssrA gene; the 2 termini fold to resemble tRNA(Ala) and it encodes a 'tag peptide', a short internal open reading frame. During trans-translation Ala-aminoacylated tmRNA acts like a tRNA, entering the A-site of stalled ribosomes, displacing the stalled mRNA. The ribosome then switches to translate the ORF on the tmRNA; the nascent peptide is terminated with the 'tag peptide' encoded by the tmRNA and targeted for degradation. The ribosome is freed to recommence translation, which seems to be the essential function of trans-translation. The protein is SsrA-binding protein of Corynebacterium diphtheriae (strain ATCC 700971 / NCTC 13129 / Biotype gravis).